A 55-amino-acid polypeptide reads, in one-letter code: Large ribosomal subunit protein bL33m (55 aa).

Belongs to the bacterial ribosomal protein bL33 family. Component of the mitochondrial large ribosomal subunit (mt-LSU). Mature yeast 74S mitochondrial ribosomes consist of a small (37S) and a large (54S) subunit. The 37S small subunit contains a 15S ribosomal RNA (15S mt-rRNA) and at least 32 different proteins. The 54S large subunit contains a 21S rRNA (21S mt-rRNA) and at least 45 different proteins. bL33m stabilizes the tRNA acceptor stem in the E-site.

The protein localises to the mitochondrion. In terms of biological role, component of the mitochondrial ribosome (mitoribosome), a dedicated translation machinery responsible for the synthesis of mitochondrial genome-encoded proteins, including at least some of the essential transmembrane subunits of the mitochondrial respiratory chain. The mitoribosomes are attached to the mitochondrial inner membrane and translation products are cotranslationally integrated into the membrane. The chain is Large ribosomal subunit protein bL33m (mrpl39) from Schizosaccharomyces pombe (strain 972 / ATCC 24843) (Fission yeast).